Reading from the N-terminus, the 177-residue chain is Large ribosomal subunit protein uL6 (177 aa).

It belongs to the universal ribosomal protein uL6 family. Part of the 50S ribosomal subunit.

Functionally, this protein binds to the 23S rRNA, and is important in its secondary structure. It is located near the subunit interface in the base of the L7/L12 stalk, and near the tRNA binding site of the peptidyltransferase center. The polypeptide is Large ribosomal subunit protein uL6 (Shewanella denitrificans (strain OS217 / ATCC BAA-1090 / DSM 15013)).